The sequence spans 339 residues: Extracellular matrix protein-binding protein emp (339 aa).

The signal sequence occupies residues 1-26 (MKKKLFVLTMSTLFATQLINSNHANA).

The protein resides in the cell surface. Functionally, adhesin that binds to the host cell extracellular matrix proteins fibronectin, fibrinogen, collagen, and vitronectin. This chain is Extracellular matrix protein-binding protein emp (emp), found in Staphylococcus aureus (strain bovine RF122 / ET3-1).